The primary structure comprises 308 residues: Tetraacyldisaccharide 4'-kinase (308 aa).

ATP is bound at residue 63-70 (SFGGNGKT).

This sequence belongs to the LpxK family.

It carries out the reaction a lipid A disaccharide + ATP = a lipid IVA + ADP + H(+). The protein operates within glycolipid biosynthesis; lipid IV(A) biosynthesis; lipid IV(A) from (3R)-3-hydroxytetradecanoyl-[acyl-carrier-protein] and UDP-N-acetyl-alpha-D-glucosamine: step 6/6. Its function is as follows. Transfers the gamma-phosphate of ATP to the 4'-position of a tetraacyldisaccharide 1-phosphate intermediate (termed DS-1-P) to form tetraacyldisaccharide 1,4'-bis-phosphate (lipid IVA). The protein is Tetraacyldisaccharide 4'-kinase of Campylobacter jejuni (strain RM1221).